Here is a 352-residue protein sequence, read N- to C-terminus: MSDSLPLLLRAARGESVERPPVWMMRQAGRYMKIYRDLRDKYPSFRERSENPDLSYEISMQPFHAFKPDGVILFSDILTPLPGMGIDFDIIESKGPQIGDPIRSMAQVDALRPLNPSESMPFVGEVLGRLRQSVGNEAAVLGFVGAPWTLAAYVVEGKSSKNYAVIKAMVFREPEILHKLLDHFAESIANYLRYQIDSGAQVVQMFDSWAGQLSPADYDTFAAPYQKKVVDLVKKTHPDTPFILYISGSAGVIERMANTGVDIVSLDWTVDMAEALARLPEHIGVQGNVDPGLLFGTPEAIEARIDDCVRKARGRKHILNLGHGILPGTPEENGEAFFRAGKSVMDRLGAVV.

Substrate-binding positions include Arg26–Arg30, Asp76, Tyr153, Ser208, and His323.

The protein belongs to the uroporphyrinogen decarboxylase family. In terms of assembly, homodimer.

It is found in the cytoplasm. It carries out the reaction uroporphyrinogen III + 4 H(+) = coproporphyrinogen III + 4 CO2. It functions in the pathway porphyrin-containing compound metabolism; protoporphyrin-IX biosynthesis; coproporphyrinogen-III from 5-aminolevulinate: step 4/4. Catalyzes the decarboxylation of four acetate groups of uroporphyrinogen-III to yield coproporphyrinogen-III. The sequence is that of Uroporphyrinogen decarboxylase from Synechococcus sp. (strain CC9605).